The sequence spans 381 residues: Chaperone protein DnaJ 1 (381 aa).

In terms of domain architecture, J spans 4–68; the sequence is DYYGLLGVSR…EKRRIVDLGG (65 aa). A CR-type zinc finger spans residues 132–214; it reads GVTKQVTVDT…CMGDGRVRAR (83 aa). Residues C145, C148, C162, C165, C188, C191, C202, and C205 each contribute to the Zn(2+) site. 4 CXXCXGXG motif repeats span residues 145-152, 162-169, 188-195, and 202-209; these read CDRCHGKG, CDTCGGRG, CPTCRGVG, and CHQCMGDG.

This sequence belongs to the DnaJ family. In terms of assembly, homodimer. Zn(2+) is required as a cofactor.

The protein localises to the cytoplasm. Functionally, participates actively in the response to hyperosmotic and heat shock by preventing the aggregation of stress-denatured proteins and by disaggregating proteins, also in an autonomous, DnaK-independent fashion. Unfolded proteins bind initially to DnaJ; upon interaction with the DnaJ-bound protein, DnaK hydrolyzes its bound ATP, resulting in the formation of a stable complex. GrpE releases ADP from DnaK; ATP binding to DnaK triggers the release of the substrate protein, thus completing the reaction cycle. Several rounds of ATP-dependent interactions between DnaJ, DnaK and GrpE are required for fully efficient folding. Also involved, together with DnaK and GrpE, in the DNA replication of plasmids through activation of initiation proteins. The protein is Chaperone protein DnaJ 1 of Mycolicibacterium paratuberculosis (strain ATCC BAA-968 / K-10) (Mycobacterium paratuberculosis).